A 143-amino-acid polypeptide reads, in one-letter code: uncharacterized protein (143 aa).

The segment at 1-143 (MRSSRQKASI…WFSQTVKRKA (143 aa)) is disordered. Basic and acidic residues-rich tracts occupy residues 34-46 (ISAE…KHLD) and 61-76 (EYQK…RKIV). 2 stretches are compositionally biased toward acidic residues: residues 77 to 93 (DDEE…PEEE) and 103 to 115 (YEEE…PDLA).

This is an uncharacterized protein from Bacillus subtilis (strain 168).